A 72-amino-acid chain; its full sequence is uncharacterized protein (72 aa).

A disordered region spans residues 1-53 (MTNEPSTSTPTSTSTSTSTSTSTSTTTLTSTSSTPTSTSTSTSTSTSTSTSTS).

This is an uncharacterized protein from Dictyostelium discoideum (Social amoeba).